The primary structure comprises 170 residues: Nicotinamide-nucleotide adenylyltransferase (170 aa).

This sequence belongs to the archaeal NMN adenylyltransferase family.

It is found in the cytoplasm. The catalysed reaction is beta-nicotinamide D-ribonucleotide + ATP + H(+) = diphosphate + NAD(+). The protein operates within cofactor biosynthesis; NAD(+) biosynthesis; NAD(+) from nicotinamide D-ribonucleotide: step 1/1. The polypeptide is Nicotinamide-nucleotide adenylyltransferase (Methanothrix thermoacetophila (strain DSM 6194 / JCM 14653 / NBRC 101360 / PT) (Methanosaeta thermophila)).